The sequence spans 307 residues: sn-1-specific diacylglycerol lipase ABHD11 (307 aa).

A mitochondrion-targeting transit peptide spans 1–34; sequence MLRWARAWRVPRGVLGASSPRRLAVPVTFCSSRS. Residue Lys79 is modified to N6-succinyllysine. The active-site Charge relay system is the Ser133. Position 196 is an N6-succinyllysine (Lys196). Catalysis depends on charge relay system residues Asp229 and His288.

It belongs to the AB hydrolase superfamily. As to quaternary structure, interacts with OGDH and DLST; this interaction maintains the functional lipoylation of the 2-oxoglutarate dehydrogenase complex. Post-translationally, phosphorylated. Expressed in white adipose tissues.

The protein localises to the mitochondrion. It localises to the mitochondrion matrix. The catalysed reaction is 1-octadecanoyl-2-(5Z,8Z,11Z,14Z-eicosatetraenoyl)-sn-glycerol + H2O = 2-(5Z,8Z,11Z,14Z-eicosatetraenoyl)-glycerol + octadecanoate + H(+). It catalyses the reaction a 1,2-diacyl-sn-glycerol + H2O = a 2-acylglycerol + a fatty acid + H(+). It carries out the reaction a 1,3-diacyl-sn-glycerol + H2O = a 1-acyl-sn-glycerol + a fatty acid + H(+). The enzyme catalyses 1-octadecanoyl-2-(9Z-octadecenoyl)-sn-glycerol + H2O = 2-(9Z-octadecenoyl)-glycerol + octadecanoate + H(+). The catalysed reaction is 1-octadecanoyl-2-(4Z,7Z,10Z,13Z,16Z,19Z-docosahexaenoyl)-sn-glycerol + H2O = 2-(4Z,7Z,10Z,13Z,16Z,19Z-docosahexaenoyl)-glycerol + octadecanoate + H(+). It catalyses the reaction 1,2-didecanoylglycerol + H2O = decanoylglycerol + decanoate + H(+). In terms of biological role, catalyzes the hydrolysis of diacylglycerol in vitro and may function as a key regulator in lipid metabolism, namely by regulating the intracellular levels of diacylglycerol. 1,2-diacyl-sn-glycerols are the preferred substrate over 1,3-diacyl-sn-glycerols. The enzyme hydrolyzes stearate in preference to palmitate from the sn-1 position of 1,2-diacyl-sn-glycerols. Maintains the functional lipoylation of the 2-oxoglutarate dehydrogenase complex (OGDHc) through its interaction with the OGDHc by preventing the formation of lipoyl adducts. In addition, is also required for the expansion and differentiation of embryonic stem cells (ESCs). The sequence is that of sn-1-specific diacylglycerol lipase ABHD11 from Mus musculus (Mouse).